Reading from the N-terminus, the 94-residue chain is Aspartyl/glutamyl-tRNA(Asn/Gln) amidotransferase subunit C (94 aa).

It belongs to the GatC family. Heterotrimer of A, B and C subunits.

The catalysed reaction is L-glutamyl-tRNA(Gln) + L-glutamine + ATP + H2O = L-glutaminyl-tRNA(Gln) + L-glutamate + ADP + phosphate + H(+). The enzyme catalyses L-aspartyl-tRNA(Asn) + L-glutamine + ATP + H2O = L-asparaginyl-tRNA(Asn) + L-glutamate + ADP + phosphate + 2 H(+). Allows the formation of correctly charged Asn-tRNA(Asn) or Gln-tRNA(Gln) through the transamidation of misacylated Asp-tRNA(Asn) or Glu-tRNA(Gln) in organisms which lack either or both of asparaginyl-tRNA or glutaminyl-tRNA synthetases. The reaction takes place in the presence of glutamine and ATP through an activated phospho-Asp-tRNA(Asn) or phospho-Glu-tRNA(Gln). This is Aspartyl/glutamyl-tRNA(Asn/Gln) amidotransferase subunit C from Syntrophomonas wolfei subsp. wolfei (strain DSM 2245B / Goettingen).